A 461-amino-acid chain; its full sequence is E3 ubiquitin-protein ligase parkin (461 aa).

Positions 30–90 (VNIYVKSNVG…DSTVIEVLDF (61 aa)) constitute a Ubiquitin-like domain. A Phosphoserine modification is found at Ser-92. The RING-type 0; atypical zinc finger occupies 145 to 227 (AHFFIYCANP…SQGENDTAVP (83 aa)). Residues Cys-151, Cys-155, Cys-167, and Cys-170 each contribute to the Zn(2+) site. The residue at position 176 (Thr-176) is a Phosphothreonine. Residues Cys-197, Cys-202, Cys-213, His-216, Cys-240, Cys-243, Cys-255, His-259, Cys-262, Cys-265, Cys-291, Cys-295, Cys-334, Cys-339, Cys-354, Cys-356, Cys-361, Cys-364, His-369, Cys-373, Cys-415, and Cys-418 each coordinate Zn(2+). The interval 236-461 (KKIPCLACTD…RDCMASHWFG (226 aa)) is TRIAD supradomain. An RING-type 1 zinc finger spans residues 240 to 295 (CLACTDICDPVLVFSCDNRHVTCLECFKNYCGSRLKDRQFLSHPDFGYTLPCPAGC). 2 IBR-type zinc fingers span residues 315-373 (EQYH…LGEC) and 411-452 (LTKP…PWER). The segment at 415–446 (CPKCRTSTERAGGCMHMICTRANCGFHWCWVC) adopts an RING-type 2; atypical zinc-finger fold. The active site involves Cys-428. Zn(2+) contacts are provided by Cys-433, Cys-438, Cys-443, Cys-446, Cys-454, and His-458.

It belongs to the RBR family. Parkin subfamily. Forms an E3 ubiquitin ligase complex with E2 ubiquitin-conjugating enzymes. Auto-ubiquitinates in an E2-dependent manner leading to its own degradation. Post-translationally, phosphorylated. Activation requires phosphorylation at Ser-92 by Pink1 and binding to Pink1-phosphorylated polyubiquitin chains. Phosphorylation at Thr-176 by Pink1 is also important for mitochondrial localization.

Its subcellular location is the mitochondrion. It is found in the cytoplasm. The protein resides in the cytosol. It carries out the reaction [E2 ubiquitin-conjugating enzyme]-S-ubiquitinyl-L-cysteine + [acceptor protein]-L-lysine = [E2 ubiquitin-conjugating enzyme]-L-cysteine + [acceptor protein]-N(6)-ubiquitinyl-L-lysine.. It functions in the pathway protein modification; protein ubiquitination. Its activity is regulated as follows. In the autoinhibited state the side chain of Phe-460 inserts into a hydrophobic groove in RING-0, occluding the ubiquitin acceptor site Cys-428, whereas the REP repressor element binds RING-1 and blocks its E2-binding site. Activation of park requires 2 steps: (1) phosphorylation at Ser-92 by Pink1 and (2) binding to phosphorylated ubiquitin, leading to unlock repression of the catalytic Cys-428 by the RING-0 region via an allosteric mechanism and converting park to its fully-active form. According to another report, phosphorylation at Ser-92 by Pink1 is not essential for activation and only binding to phosphorylated ubiquitin is essential to unlock repression. E3 ubiquitin-protein ligase which accepts ubiquitin from E2 ubiquitin-conjugating enzymes in the form of a thioester and then directly transfers the ubiquitin to targeted substrates, such as Marf, Opa1, Sep1, Tom20 and porin. Mediates monoubiquitination as well as 'Lys-6', 'Lys-11', 'Lys-48'-linked and 'Lys-63'-linked polyubiquitination of substrates, depending on the context. Protects against mitochondrial dysfunction during cellular stress, by acting downstream of Pink1, to coordinate mitochondrial quality control mechanisms that remove and replace dysfunctional mitochondrial components. Depending on the severity of mitochondrial damage and/or dysfunction, activity ranges from preventing apoptosis and stimulating mitochondrial biogenesis to regulating mitochondrial dynamics and eliminating severely damaged mitochondria via mitophagy. Appears to be particularly important in maintaining the physiology and function of cells with high energy demands that are undergoing stress or altered metabolic environment, including spermatids, muscle cells and neurons such as the dopaminergic (DA) neurons. Activation and recruitment onto the outer membrane of damaged/dysfunctional mitochondria (OMM) requires Pink1-mediated phosphorylation of both park and ubiquitin. In depolarized mitochondria, mediates the decision between mitophagy or preventing apoptosis by inducing either the poly- or monoubiquitination of porin/VDAC; polyubiquitination of porin promotes mitophagy, while monoubiquitination of porin decreases mitochondrial calcium influx which ultimately inhibits apoptosis. When cellular stress results in irreversible mitochondrial damage, promotes the autophagic degradation of dysfunctional depolarized mitochondria (mitophagy) by promoting the ubiquitination of mitochondrial proteins. Preferentially assembles 'Lys-6'-, 'Lys-11'- and 'Lys-63'-linked polyubiquitin chains following mitochondrial damage, leading to mitophagy. In developing tissues, inhibits JNK-mediated apoptosis by negatively regulating bsk transcription. The Pink1-park pathway also promotes fission and/or inhibits fusion of damaged mitochondria by mediating the ubiquitination and subsequent degradation of proteins involved in mitochondrial fusion/fission such as Marf and Opa1. This prevents the refusion of unhealthy mitochondria with the healthy mitochondrial network and/or initiates mitochondrial fragmentation facilitating their later engulfment by autophagosomes. Regulates motility of damaged mitochondria by phosphorylating Miro which likely promotes its park-dependent degradation by the proteasome; in motor neurons, this inhibits mitochondrial intracellular anterograde transport along the axons which probably increases the chance of the mitochondria being eliminated in the soma. The Pink1-park pathway is also involved in mitochondrial regeneration processes such as promoting mitochondrial biogenesis, activating localized mitochondrial repair, promoting selective turnover of mitochondrial proteins and initiating the mitochondrial import of endogenous proteins. Involved in mitochondrial biogenesis via the ubiquitination of transcriptional repressor Paris which leads to its subsequent proteasomal degradation and allows activation of the transcription factor srl. Promotes localized mitochondrial repair by activating the translation of specific nuclear-encoded mitochondrial RNAs (nc-mtRNAs) on the mitochondrial surface, including several key electron transport chain component nc-mtRNAs. This Pediculus humanus subsp. corporis (Body louse) protein is E3 ubiquitin-protein ligase parkin.